The sequence spans 273 residues: 3-((Z)-2-isocyanoethenyl)-1H-indole synthase (273 aa).

The Fe cation site is built by His-105, Asp-107, and His-254.

It belongs to the TfdA dioxygenase family. Fe(2+) serves as cofactor.

The enzyme catalyses (2S)-3-(1H-indol-3-yl)-2-isocyanopropanoate + 2-oxoglutarate + O2 + H(+) = 3-[(Z)-2-isocyanoethenyl]-1H-indole + succinate + 2 CO2 + H2O. Involved in the biosynthesis of ambiguines, a family of hapalindole-type alkaloids. Responsible for the synthesis of Z-3-(2-isocyanoethen)-indole, a biosynthetic precursor to all ambiguines. In Fischerella ambigua (strain UTEX 1903), this protein is 3-((Z)-2-isocyanoethenyl)-1H-indole synthase.